Consider the following 156-residue polypeptide: Transcriptional repressor NrdR (156 aa).

Residues 3-34 fold into a zinc finger; that stretch reads CPYCRHPDSRVVDSREAEEGAAIRRRRSCPNC. Positions 46 to 136 constitute an ATP-cone domain; sequence LSVVKRSGVT…VYRSFTSAED (91 aa).

Belongs to the NrdR family. Zn(2+) serves as cofactor.

Its function is as follows. Negatively regulates transcription of bacterial ribonucleotide reductase nrd genes and operons by binding to NrdR-boxes. This Nocardia farcinica (strain IFM 10152) protein is Transcriptional repressor NrdR.